A 178-amino-acid polypeptide reads, in one-letter code: MORN repeat-containing protein 5 (178 aa).

3 MORN repeats span residues 8-30 (YDGD…THTR), 31-53 (YVGE…NGSK), and 54-75 (YEGT…DGLK).

The protein resides in the cell projection. Its subcellular location is the cilium. The protein localises to the flagellum. The protein is MORN repeat-containing protein 5 (morn5) of Danio rerio (Zebrafish).